The chain runs to 812 residues: cAMP-regulated phosphoprotein 21 (812 aa).

Residues 1–130 (MSEQGDLNQA…KDKTSEKPKI (130 aa)) form a disordered region. Serine 2 bears the N-acetylserine mark. A compositionally biased stretch (low complexity) spans 9–25 (QAIAEEGGTEQETATPE). The stretch at 32–58 (ESLDEEEKLELQRRLEAQNQERRKSKS) forms a coiled coil. Position 33 is a phosphoserine (serine 33). The segment covering 40–53 (LELQRRLEAQNQER) has biased composition (basic and acidic residues). Serine 56 carries the post-translational modification Phosphoserine. Positions 90-100 (IHLQLSSFSSL) are enriched in low complexity. A compositionally biased stretch (basic and acidic residues) spans 102–130 (EEDKSRKDDSEREKEKDKNKDKTSEKPKI). Phosphoserine is present on serine 134. The 64-residue stretch at 164 to 227 (RMILLKMEQE…SVIINKTSST (64 aa)) folds into the R3H domain. An SUZ domain is found at 228–300 (RIPEQRFCEH…VRERIFAHDS (73 aa)). Positions 246–281 (SQKRFILKRDNSSIDKEDNQQNRMHPFRDDRRSKSI) are disordered. Position 300 is a phosphoserine (serine 300). Disordered regions lie at residues 332-436 (RGNR…PLVS), 485-544 (HTGQ…MAGP), and 561-632 (LSRQ…QQPP). The span at 339 to 349 (GRTSGSRQSSS) shows a compositional bias: low complexity. Positions 351-360 (NELKWSDHQR) are enriched in basic and acidic residues. The segment covering 361-373 (AWSSTDSDSSNRN) has biased composition (polar residues). Serine 363 and serine 383 each carry phosphoserine. The segment covering 391–423 (TRGDSTSSTRSTGKLSKAGSESSSSAGSSGSLS) has biased composition (low complexity). A Phosphoserine modification is found at serine 562. Polar residues predominate over residues 582–602 (LMPQPAQQPSYVIASTGQQLP). Residues 619–632 (QPPPSPQGFVQQPP) show a composition bias toward pro residues. An Asymmetric dimethylarginine modification is found at arginine 655.

As to quaternary structure, interacts with CALM1. In terms of processing, phosphorylation at Ser-56 favors interaction with CALM1. Isoform 1 is methylated by CARM1 at Arg-655 in immature thymocytes. In terms of tissue distribution, isoform 2 is expressed in brain. Isoform 1 is present in immature thymocytes (at protein level).

The protein localises to the cytoplasm. Isoform 2 may act as a competitive inhibitor of calmodulin-dependent enzymes such as calcineurin in neurons. In Homo sapiens (Human), this protein is cAMP-regulated phosphoprotein 21 (ARPP21).